A 295-amino-acid chain; its full sequence is Bifunctional protein FolD (295 aa).

Residues 166 to 168 (GRS), serine 195, and isoleucine 236 contribute to the NADP(+) site.

It belongs to the tetrahydrofolate dehydrogenase/cyclohydrolase family. As to quaternary structure, homodimer.

The catalysed reaction is (6R)-5,10-methylene-5,6,7,8-tetrahydrofolate + NADP(+) = (6R)-5,10-methenyltetrahydrofolate + NADPH. It carries out the reaction (6R)-5,10-methenyltetrahydrofolate + H2O = (6R)-10-formyltetrahydrofolate + H(+). It participates in one-carbon metabolism; tetrahydrofolate interconversion. In terms of biological role, catalyzes the oxidation of 5,10-methylenetetrahydrofolate to 5,10-methenyltetrahydrofolate and then the hydrolysis of 5,10-methenyltetrahydrofolate to 10-formyltetrahydrofolate. This chain is Bifunctional protein FolD, found in Chlorobium phaeobacteroides (strain DSM 266 / SMG 266 / 2430).